Reading from the N-terminus, the 876-residue chain is MSKKTNINTNTKINNFFQTKTNNANVVNEKGYIEDDNEIIDINDFEEDQNLYKIQNKSNGNNSINNNNNNKNTPTKPNLNLTPTKSHTISFPTRPKLPSFTQPNNNNNNNNNNNNNNNINNNNNNNNNNNNNNNNNNNNNNNNSSTNVKPTTTTTTTTTINNNNNNNNNNNINNNNIDLKNKYSFLTNFKKKSFAPLSEQMRPTELSDFIGQESLLVGDPIVKKLFQSPELPSFILYGPPGCGKTTLAQIVASKSNYNINALSAVGSGVKDIKEVIDKARNTLQFGKKTILFIDEIHRYNKLQQDVLLPAIESGIIILIGATTENPSFELNGALLSRCKVFKMEKLTKENLETLIKRTLEVTPLLMDRRLIMDEDAIKSLAEIADGDARVAINVLDMAIKANKEEQTYKERMEEKHSTSGIVRDIVLTKKQMGSLLQRTSLIYDKGGDAFYELISALHKSVRGSDANATAYWVIRMLESGCEPLYIVRRMVRMASEDIGLADNSALPLAIAAYQAVHFVGMPECTNAILQCAVYLANAAKSNSCDHWYAHTREYLEKHEGPPVPIHLRNAPTKMMKDWGYGADYQYNHAFDDQSQVTQIYLPEPIKNEKFFEYKLTCPSVKDRQQSQDQTQRSSQQQQQQQTQPQQQTQPQQQTQQQIQQQLEQLKQIQQQLEQQVQQQIQQQSSQSPSQQSQLQELQQIQQQLQQIQQTNSQINNKNNDSNIIKKNVNNSLDLNPTLPKKQKMIIPSILDNSNNNNNNNNINKSPTPIKKANISHNQLDSSINTSAITIDDSSECDINFDDDFDMASVSSTTMISNIPVGANVAGATEAETETKAISSTDTKESVSINDSDKDLTTTHKNEQDQNNPPDPISLDF.

Composition is skewed to low complexity over residues 56–85 (NKSNGNNSINNNNNNKNTPTKPNLNLTPTK) and 104–175 (NNNN…INNN). The disordered stretch occupies residues 56-175 (NKSNGNNSIN…NNNNNNINNN (120 aa)). An ATP-binding site is contributed by 240–246 (PGCGKTT). Disordered regions lie at residues 621–647 (KDRQQSQDQTQRSSQQQQQQQTQPQQQ), 714–737 (INNKNNDSNIIKKNVNNSLDLNPT), and 833–876 (ETKA…SLDF). Composition is skewed to low complexity over residues 626–647 (SQDQTQRSSQQQQQQQTQPQQQ) and 714–731 (INNKNNDSNIIKKNVNNS). Residues 835–849 (KAISSTDTKESVSIN) are compositionally biased toward polar residues. The segment covering 850-863 (DSDKDLTTTHKNEQ) has biased composition (basic and acidic residues).

The protein belongs to the AAA ATPase family. RarA/MGS1/WRNIP1 subfamily.

Its subcellular location is the nucleus. The catalysed reaction is ATP + H2O = ADP + phosphate + H(+). Its function is as follows. Functions as a modulator for initiation or reinitiation events during DNA polymerase delta-mediated DNA synthesis. Has an intrinsic ATPase activity that functions as a sensor of DNA damage or of arrested replication forks and regulates the extent of DNA synthesis. This is ATPase WRNIP1 from Dictyostelium discoideum (Social amoeba).